A 294-amino-acid polypeptide reads, in one-letter code: 4-hydroxy-tetrahydrodipicolinate synthase (294 aa).

Threonine 47 provides a ligand contact to pyruvate. The active-site Proton donor/acceptor is the tyrosine 136. The active-site Schiff-base intermediate with substrate is lysine 164. Position 206 (valine 206) interacts with pyruvate.

Belongs to the DapA family. As to quaternary structure, homotetramer; dimer of dimers.

It localises to the cytoplasm. It carries out the reaction L-aspartate 4-semialdehyde + pyruvate = (2S,4S)-4-hydroxy-2,3,4,5-tetrahydrodipicolinate + H2O + H(+). Its pathway is amino-acid biosynthesis; L-lysine biosynthesis via DAP pathway; (S)-tetrahydrodipicolinate from L-aspartate: step 3/4. Catalyzes the condensation of (S)-aspartate-beta-semialdehyde [(S)-ASA] and pyruvate to 4-hydroxy-tetrahydrodipicolinate (HTPA). This is 4-hydroxy-tetrahydrodipicolinate synthase from Nostoc punctiforme (strain ATCC 29133 / PCC 73102).